We begin with the raw amino-acid sequence, 136 residues long: Large ribosomal subunit protein uL16 (136 aa).

It belongs to the universal ribosomal protein uL16 family. As to quaternary structure, part of the 50S ribosomal subunit.

Binds 23S rRNA and is also seen to make contacts with the A and possibly P site tRNAs. The protein is Large ribosomal subunit protein uL16 of Rickettsia africae (strain ESF-5).